The sequence spans 141 residues: Large ribosomal subunit protein uL16c (141 aa).

The segment covering 1 to 17 has biased composition (basic residues); that stretch reads MLSPKRTKYRKPHRGNR. Residues 1 to 21 are disordered; it reads MLSPKRTKYRKPHRGNRKGQA.

It belongs to the universal ribosomal protein uL16 family. As to quaternary structure, part of the 50S ribosomal subunit.

Its subcellular location is the plastid. It localises to the chloroplast. In Ostreococcus tauri, this protein is Large ribosomal subunit protein uL16c.